We begin with the raw amino-acid sequence, 148 residues long: Flagellar assembly factor FliW (148 aa).

This sequence belongs to the FliW family. Interacts with translational regulator CsrA and flagellin(s).

It is found in the cytoplasm. In terms of biological role, acts as an anti-CsrA protein, binds CsrA and prevents it from repressing translation of its target genes, one of which is flagellin. Binds to flagellin and participates in the assembly of the flagellum. In Ruminiclostridium cellulolyticum (strain ATCC 35319 / DSM 5812 / JCM 6584 / H10) (Clostridium cellulolyticum), this protein is Flagellar assembly factor FliW.